We begin with the raw amino-acid sequence, 636 residues long: Chaperone protein DnaK (636 aa).

Thr198 is modified (phosphothreonine; by autocatalysis). Residues 600–636 are disordered; that stretch reads IAQQQAQAQQGSAEAGAQSQEDDVVDAEFEEVKDDKK. Over residues 601 to 618 the composition is skewed to low complexity; sequence AQQQAQAQQGSAEAGAQS. Over residues 619–636 the composition is skewed to acidic residues; the sequence is QEDDVVDAEFEEVKDDKK.

This sequence belongs to the heat shock protein 70 family.

Its function is as follows. Acts as a chaperone. This chain is Chaperone protein DnaK, found in Vibrio vulnificus (strain CMCP6).